We begin with the raw amino-acid sequence, 369 residues long: UDP-N-acetylglucosamine--N-acetylmuramyl-(pentapeptide) pyrophosphoryl-undecaprenol N-acetylglucosamine transferase (369 aa).

UDP-N-acetyl-alpha-D-glucosamine is bound by residues 15-17 (TGG), N126, R169, S197, and Q299.

The protein belongs to the glycosyltransferase 28 family. MurG subfamily.

The protein resides in the cell inner membrane. It catalyses the reaction di-trans,octa-cis-undecaprenyl diphospho-N-acetyl-alpha-D-muramoyl-L-alanyl-D-glutamyl-meso-2,6-diaminopimeloyl-D-alanyl-D-alanine + UDP-N-acetyl-alpha-D-glucosamine = di-trans,octa-cis-undecaprenyl diphospho-[N-acetyl-alpha-D-glucosaminyl-(1-&gt;4)]-N-acetyl-alpha-D-muramoyl-L-alanyl-D-glutamyl-meso-2,6-diaminopimeloyl-D-alanyl-D-alanine + UDP + H(+). It functions in the pathway cell wall biogenesis; peptidoglycan biosynthesis. Cell wall formation. Catalyzes the transfer of a GlcNAc subunit on undecaprenyl-pyrophosphoryl-MurNAc-pentapeptide (lipid intermediate I) to form undecaprenyl-pyrophosphoryl-MurNAc-(pentapeptide)GlcNAc (lipid intermediate II). The chain is UDP-N-acetylglucosamine--N-acetylmuramyl-(pentapeptide) pyrophosphoryl-undecaprenol N-acetylglucosamine transferase from Methylobacterium radiotolerans (strain ATCC 27329 / DSM 1819 / JCM 2831 / NBRC 15690 / NCIMB 10815 / 0-1).